The following is a 481-amino-acid chain: ATP synthase subunit beta, plastid (481 aa).

162-169 (GGAGVGKT) contacts ATP.

Belongs to the ATPase alpha/beta chains family. As to quaternary structure, F-type ATPases have 2 components, CF(1) - the catalytic core - and CF(0) - the membrane proton channel. CF(1) has five subunits: alpha(3), beta(3), gamma(1), delta(1), epsilon(1). CF(0) has four main subunits: a(1), b(1), b'(1) and c(9-12).

Its subcellular location is the plastid membrane. It catalyses the reaction ATP + H2O + 4 H(+)(in) = ADP + phosphate + 5 H(+)(out). Produces ATP from ADP in the presence of a proton gradient across the membrane. The catalytic sites are hosted primarily by the beta subunits. This is ATP synthase subunit beta, plastid (atpB) from Prototheca wickerhamii.